The chain runs to 247 residues: Cell division protein ZapD (247 aa).

The protein belongs to the ZapD family. Interacts with FtsZ.

Its subcellular location is the cytoplasm. Its function is as follows. Cell division factor that enhances FtsZ-ring assembly. Directly interacts with FtsZ and promotes bundling of FtsZ protofilaments, with a reduction in FtsZ GTPase activity. This Escherichia coli O17:K52:H18 (strain UMN026 / ExPEC) protein is Cell division protein ZapD.